Here is a 984-residue protein sequence, read N- to C-terminus: Ephrin type-A receptor 3 (984 aa).

A signal peptide spans 1–20 (MDCHLSILILFGCCVLSCSR). Residues 21 to 541 (ELSPQPSNEV…SFSISGENSH (521 aa)) lie on the Extracellular side of the membrane. The Eph LBD domain occupies 29-207 (EVNLLDSKTI…YFKKCPFTVK (179 aa)). Residues Asn-232, Asn-337, Asn-391, Asn-404, and Asn-493 are each glycosylated (N-linked (GlcNAc...) asparagine). 2 Fibronectin type-III domains span residues 325–435 (PPSA…TNQA) and 436–532 (APSP…SPDS). Residues 542–565 (VVMIAISAAVAIIVLTVVTYVLVG) traverse the membrane as a helical segment. At 566 to 984 (RFCGYHKSKH…TQSKNGPVPV (419 aa)) the chain is on the cytoplasmic side. Residues Tyr-597 and Tyr-603 each carry the phosphotyrosine; by autocatalysis modification. Residues 622-883 (IAIDKVVGAG…QIVSILDKLI (262 aa)) enclose the Protein kinase domain. ATP contacts are provided by residues 629 to 634 (GAGEFG), Lys-654, and 701 to 707 (EYMENGS). The residue at position 702 (Tyr-702) is a Phosphotyrosine; by autocatalysis. Catalysis depends on Asp-747, which acts as the Proton acceptor. 751–752 (RN) provides a ligand contact to ATP. At Tyr-780 the chain carries Phosphotyrosine; by autocatalysis. One can recognise an SAM domain in the interval 912–976 (ATFHTTGDWL…ISSIKALETQ (65 aa)). Tyr-938 carries the post-translational modification Phosphotyrosine. The PDZ-binding motif lies at 982–984 (VPV).

Belongs to the protein kinase superfamily. Tyr protein kinase family. Ephrin receptor subfamily. As to quaternary structure, heterotetramer upon binding of the ligand. The heterotetramer is composed of an ephrin dimer and a receptor dimer. Oligomerization is probably required to induce biological responses. Forms a ternary EFNA5-EPHA3-ADAM10 complex mediating EFNA5 extracellular domain shedding by ADAM10 which regulates the EFNA5-EPHA3 complex internalization and function. Interacts (phosphorylated) with PTPN1; dephosphorylates EPHA3 and may regulate its trafficking and function. Interacts (phosphorylated) with CRK; mediates EFNA5-EPHA3 signaling through RHOA GTPase activation. Interacts with NCK1 (via SH2 domain); mediates EFNA5-EPHA3 signaling. Autophosphorylates upon activation by EFNA5. Phosphorylation on Tyr-603 mediates interaction with NCK1. Dephosphorylated by PTPN1. Most abundant in the heart, brain and lung.

Its subcellular location is the cell membrane. The catalysed reaction is L-tyrosyl-[protein] + ATP = O-phospho-L-tyrosyl-[protein] + ADP + H(+). Receptor tyrosine kinase which binds promiscuously membrane-bound ephrin family ligands residing on adjacent cells, leading to contact-dependent bidirectional signaling into neighboring cells. The signaling pathway downstream of the receptor is referred to as forward signaling while the signaling pathway downstream of the ephrin ligand is referred to as reverse signaling. Highly promiscuous for ephrin-A ligands it binds preferentially EFNA5. Upon activation by EFNA5 regulates cell-cell adhesion, cytoskeletal organization and cell migration. Plays a role in cardiac cells migration and differentiation and regulates the formation of the atrioventricular canal and septum during development probably through activation by EFNA1. Involved in the retinotectal mapping of neurons. May also control the segregation but not the guidance of motor and sensory axons during neuromuscular circuit development. This Rattus norvegicus (Rat) protein is Ephrin type-A receptor 3 (Epha3).